Consider the following 146-residue polypeptide: Coactosin (146 aa).

One can recognise an ADF-H domain in the interval 1 to 132 (MADVSSTELK…NEEELMTKVR (132 aa)).

This sequence belongs to the actin-binding proteins ADF family. Coactosin subfamily. Post-translationally, the N-terminus is blocked.

The protein localises to the cytoplasm. The protein resides in the cytoskeleton. Binds to F-actin in a calcium independent manner. Binds to the filaments along their length. In Dictyostelium discoideum (Social amoeba), this protein is Coactosin (coaA).